A 549-amino-acid chain; its full sequence is Chaperonin GroEL (549 aa).

ATP contacts are provided by residues 29-32 (TAGP), lysine 50, 86-90 (DGTTT), glycine 418, and aspartate 499.

The protein belongs to the chaperonin (HSP60) family. In terms of assembly, forms a cylinder of 14 subunits composed of two heptameric rings stacked back-to-back. Interacts with the co-chaperonin GroES.

Its subcellular location is the cytoplasm. It carries out the reaction ATP + H2O + a folded polypeptide = ADP + phosphate + an unfolded polypeptide.. Its function is as follows. Together with its co-chaperonin GroES, plays an essential role in assisting protein folding. The GroEL-GroES system forms a nano-cage that allows encapsulation of the non-native substrate proteins and provides a physical environment optimized to promote and accelerate protein folding. The polypeptide is Chaperonin GroEL (Wolbachia sp. subsp. Drosophila simulans (strain wRi)).